The sequence spans 370 residues: G-protein coupled receptor homolog K2 (370 aa).

The Extracellular portion of the chain corresponds to 1-61; sequence MTSPTNSTML…CTFLEDTKYH (61 aa). Asparagine 6 and asparagine 51 each carry an N-linked (GlcNAc...) asparagine; by host glycan. A helical membrane pass occupies residues 62-82; the sequence is IIVIHIILFLLGSIGNIFVVS. At 83–94 the chain is on the cytoplasmic side; the sequence is LIAFKRNKSITD. A helical transmembrane segment spans residues 95–115; sequence IYILNLSMSDCIFVFQIPFIV. Residues 116–131 are Extracellular-facing; sequence YSKLDQWIFGNILCKI. Residues 132–152 form a helical membrane-spanning segment; sequence MSVLYYVGFFSNMFIITLMSI. Residues 153-171 are Cytoplasmic-facing; sequence DRYFAIVHPIKRQPYRTKR. Residues 172 to 192 traverse the membrane as a helical segment; the sequence is IGILMCCSAWLLSLILSSPVS. The Extracellular segment spans residues 193–223; the sequence is KLYENIPHMSKDIYQCTLTNENDSIIAFIKR. The chain crosses the membrane as a helical span at residues 224–244; sequence LMQIEITILGFLIPIIIFVYC. Residues 245 to 265 lie on the Cytoplasmic side of the membrane; that stretch reads YYRIFTTVVRLRNRRKYKSIK. The chain crosses the membrane as a helical span at residues 266-286; that stretch reads IVLMIVVCSLICWIPLYIVLM. At 287-300 the chain is on the extracellular side; that stretch reads IATIVSLYTSNIFR. A helical transmembrane segment spans residues 301 to 321; that stretch reads HLCLYLNLAYAITFSETISLA. Over 322 to 370 the chain is Cytoplasmic; it reads RCCINPIIYTLIGEHVRSRISSICSCIYRDNRIRKKLFSRKSSSSSNII.

It belongs to the G-protein coupled receptor 1 family.

It is found in the host cell membrane. Putative chemokine receptor. The protein is G-protein coupled receptor homolog K2 of Sus scrofa (Pig).